Here is a 300-residue protein sequence, read N- to C-terminus: ATP-dependent (S)-NAD(P)H-hydrate dehydratase (300 aa).

A YjeF C-terminal domain is found at 6-297; sequence YAGKIKEFIP…GCIHQSFTSL (292 aa). (6S)-NADPHX-binding positions include glycine 106 and 158-164; that span reads NEVEFKR. ATP-binding positions include 188-192 and 218-227; these read KGSTD and GSNRRCGGQG. Aspartate 228 contacts (6S)-NADPHX.

The protein belongs to the NnrD/CARKD family. It depends on Mg(2+) as a cofactor.

The enzyme catalyses (6S)-NADHX + ATP = ADP + phosphate + NADH + H(+). It carries out the reaction (6S)-NADPHX + ATP = ADP + phosphate + NADPH + H(+). Catalyzes the dehydration of the S-form of NAD(P)HX at the expense of ATP, which is converted to ADP. Together with NAD(P)HX epimerase, which catalyzes the epimerization of the S- and R-forms, the enzyme allows the repair of both epimers of NAD(P)HX, a damaged form of NAD(P)H that is a result of enzymatic or heat-dependent hydration. This chain is ATP-dependent (S)-NAD(P)H-hydrate dehydratase, found in Pediculus humanus subsp. corporis (Body louse).